We begin with the raw amino-acid sequence, 165 residues long: Phosphopantetheine adenylyltransferase (165 aa).

Ser-10 is a binding site for substrate. ATP-binding positions include Ser-10–Phe-11 and His-18. Substrate contacts are provided by Lys-42, Leu-74, and Arg-88. Residues Gly-89–Arg-91, Glu-99, and Trp-124–Thr-130 each bind ATP.

Belongs to the bacterial CoaD family. As to quaternary structure, homohexamer. Requires Mg(2+) as cofactor.

It is found in the cytoplasm. It catalyses the reaction (R)-4'-phosphopantetheine + ATP + H(+) = 3'-dephospho-CoA + diphosphate. It participates in cofactor biosynthesis; coenzyme A biosynthesis; CoA from (R)-pantothenate: step 4/5. Functionally, reversibly transfers an adenylyl group from ATP to 4'-phosphopantetheine, yielding dephospho-CoA (dPCoA) and pyrophosphate. This Syntrophus aciditrophicus (strain SB) protein is Phosphopantetheine adenylyltransferase.